The following is a 424-amino-acid chain: Tyrosine--tRNA ligase (424 aa).

An L-tyrosine-binding site is contributed by tyrosine 37. The short motif at 42-51 (PTADSLHLGH) is the 'HIGH' region element. L-tyrosine is bound by residues tyrosine 175 and glutamine 179. A 'KMSKS' region motif is present at residues 235–239 (KFGKT). Lysine 238 lines the ATP pocket. The S4 RNA-binding domain maps to 357–414 (AELQKALVSAQLAPSRSQARTLIQSSSISVNGKKQLKPEYIFTSEDRLLDRYTLLRRG).

Belongs to the class-I aminoacyl-tRNA synthetase family. TyrS type 1 subfamily. Homodimer.

It localises to the cytoplasm. The catalysed reaction is tRNA(Tyr) + L-tyrosine + ATP = L-tyrosyl-tRNA(Tyr) + AMP + diphosphate + H(+). Its function is as follows. Catalyzes the attachment of tyrosine to tRNA(Tyr) in a two-step reaction: tyrosine is first activated by ATP to form Tyr-AMP and then transferred to the acceptor end of tRNA(Tyr). This is Tyrosine--tRNA ligase from Hamiltonella defensa subsp. Acyrthosiphon pisum (strain 5AT).